A 619-amino-acid polypeptide reads, in one-letter code: Chaperone protein HscA homolog (619 aa).

The protein belongs to the heat shock protein 70 family.

Chaperone involved in the maturation of iron-sulfur cluster-containing proteins. Has a low intrinsic ATPase activity which is markedly stimulated by HscB. This Acinetobacter baumannii (strain ATCC 17978 / DSM 105126 / CIP 53.77 / LMG 1025 / NCDC KC755 / 5377) protein is Chaperone protein HscA homolog.